A 270-amino-acid polypeptide reads, in one-letter code: uncharacterized protein (270 aa).

This is an uncharacterized protein from Bacillus anthracis.